Here is a 114-residue protein sequence, read N- to C-terminus: Iron-sulfur cluster insertion protein ErpA (114 aa).

3 residues coordinate iron-sulfur cluster: cysteine 42, cysteine 106, and cysteine 108.

Belongs to the HesB/IscA family. In terms of assembly, homodimer. Iron-sulfur cluster serves as cofactor.

Functionally, required for insertion of 4Fe-4S clusters for at least IspG. This chain is Iron-sulfur cluster insertion protein ErpA, found in Citrobacter koseri (strain ATCC BAA-895 / CDC 4225-83 / SGSC4696).